Here is a 529-residue protein sequence, read N- to C-terminus: Peptide chain release factor 3 (529 aa).

One can recognise a tr-type G domain in the interval 11–280; that stretch reads KKRRTFAIIS…GLVEWAPAPL (270 aa). GTP contacts are provided by residues 20–27, 88–92, and 142–145; these read SHPDAGKT, DTPGH, and NKLD.

It belongs to the TRAFAC class translation factor GTPase superfamily. Classic translation factor GTPase family. PrfC subfamily.

It is found in the cytoplasm. Functionally, increases the formation of ribosomal termination complexes and stimulates activities of RF-1 and RF-2. It binds guanine nucleotides and has strong preference for UGA stop codons. It may interact directly with the ribosome. The stimulation of RF-1 and RF-2 is significantly reduced by GTP and GDP, but not by GMP. The polypeptide is Peptide chain release factor 3 (Alteromonas mediterranea (strain DSM 17117 / CIP 110805 / LMG 28347 / Deep ecotype)).